A 90-amino-acid polypeptide reads, in one-letter code: Acylphosphatase (90 aa).

The Acylphosphatase-like domain occupies 3-90 (RYSAIVQGRV…DGEKKFSIKY (88 aa)). Catalysis depends on residues Arg-18 and Asn-36.

It belongs to the acylphosphatase family.

The catalysed reaction is an acyl phosphate + H2O = a carboxylate + phosphate + H(+). The protein is Acylphosphatase (acyP) of Clostridium beijerinckii (strain ATCC 51743 / NCIMB 8052) (Clostridium acetobutylicum).